The chain runs to 178 residues: Adenine phosphoribosyltransferase (178 aa).

The protein belongs to the purine/pyrimidine phosphoribosyltransferase family. As to quaternary structure, homodimer.

Its subcellular location is the cytoplasm. It catalyses the reaction AMP + diphosphate = 5-phospho-alpha-D-ribose 1-diphosphate + adenine. It functions in the pathway purine metabolism; AMP biosynthesis via salvage pathway; AMP from adenine: step 1/1. In terms of biological role, catalyzes a salvage reaction resulting in the formation of AMP, that is energically less costly than de novo synthesis. The chain is Adenine phosphoribosyltransferase from Cereibacter sphaeroides (strain ATCC 17029 / ATH 2.4.9) (Rhodobacter sphaeroides).